Reading from the N-terminus, the 126-residue chain is Protein ApaG (126 aa).

In terms of domain architecture, ApaG spans 2–126; sequence DVSLPCIKIQ…FRLAVPHVLN (125 aa).

This Vibrio cholerae serotype O1 (strain ATCC 39541 / Classical Ogawa 395 / O395) protein is Protein ApaG.